The following is a 323-amino-acid chain: Viral cathepsin (323 aa).

An N-terminal signal peptide occupies residues Met-1–Ser-16. The propeptide at Ala-17–Gly-112 is activation peptide. Cystine bridges form between Cys-133/Cys-174, Cys-167/Cys-207, and Cys-262/Cys-310. Cys-136 is an active-site residue. N-linked (GlcNAc...) asparagine; by host glycosylation is present at Asn-158. Residues His-269 and Asn-289 contribute to the active site.

The protein belongs to the peptidase C1 family. In terms of processing, synthesized as an inactive proenzyme and activated by proteolytic removal of the inhibitory propeptide.

The catalysed reaction is Endopeptidase of broad specificity, hydrolyzing substrates of both cathepsin L and cathepsin B.. Functionally, cysteine protease that plays an essential role in host liquefaction to facilitate horizontal transmission of the virus. May participate in the degradation of foreign protein expressed by the baculovirus system. The polypeptide is Viral cathepsin (VCATH) (Bombyx mori (Silk moth)).